Reading from the N-terminus, the 431-residue chain is Serine--tRNA ligase (431 aa).

235-237 is an L-serine binding site; the sequence is TAE. ATP contacts are provided by residues 266–268 and valine 282; that span reads RRE. Position 289 (glutamate 289) interacts with L-serine. 353 to 356 is an ATP binding site; it reads EASS. Position 389 (serine 389) interacts with L-serine.

The protein belongs to the class-II aminoacyl-tRNA synthetase family. Type-1 seryl-tRNA synthetase subfamily. In terms of assembly, homodimer. The tRNA molecule binds across the dimer.

It localises to the cytoplasm. It catalyses the reaction tRNA(Ser) + L-serine + ATP = L-seryl-tRNA(Ser) + AMP + diphosphate + H(+). The enzyme catalyses tRNA(Sec) + L-serine + ATP = L-seryl-tRNA(Sec) + AMP + diphosphate + H(+). It participates in aminoacyl-tRNA biosynthesis; selenocysteinyl-tRNA(Sec) biosynthesis; L-seryl-tRNA(Sec) from L-serine and tRNA(Sec): step 1/1. Its function is as follows. Catalyzes the attachment of serine to tRNA(Ser). Is also able to aminoacylate tRNA(Sec) with serine, to form the misacylated tRNA L-seryl-tRNA(Sec), which will be further converted into selenocysteinyl-tRNA(Sec). The polypeptide is Serine--tRNA ligase (Pelodictyon phaeoclathratiforme (strain DSM 5477 / BU-1)).